A 299-amino-acid polypeptide reads, in one-letter code: MAILIGERPAQALWRDYLELTKPKVVVLMLITSLVGMFLATRAGVPWTVLVFGNLGIALCAGGAAAVNHVVDRRIDAVMARTHKRPLADGRVSPTGALTFALVLALLGQALLLTFTNPLTAWLTLASLLGYAVIYTGFLKRATPQNIVIGGLAGAAPPLLGWTAATGHVSAEPLLLVLIIFAWTPPHFWALAIHRKEEYAKADIPMLPVTHGEHYTKVHILLYTFALLAVSLLPYVIHMSGLLYLICALGLGARFLQWAVVLYRGTRPHAAINTFKYSIWYLFLLFIALLVDHYLLLNL.

The next 8 membrane-spanning stretches (helical) occupy residues 25-45 (VVVLMLITSLVGMFLATRAGV), 47-67 (WTVLVFGNLGIALCAGGAAAV), 95-115 (TGALTFALVLALLGQALLLTF), 119-139 (LTAWLTLASLLGYAVIYTGFL), 147-167 (IVIGGLAGAAPPLLGWTAATG), 173-193 (PLLLVLIIFAWTPPHFWALAI), 226-246 (ALLAVSLLPYVIHMSGLLYLI), and 279-299 (IWYLFLLFIALLVDHYLLLNL).

It belongs to the UbiA prenyltransferase family. Protoheme IX farnesyltransferase subfamily.

The protein resides in the cell inner membrane. It carries out the reaction heme b + (2E,6E)-farnesyl diphosphate + H2O = Fe(II)-heme o + diphosphate. Its pathway is porphyrin-containing compound metabolism; heme O biosynthesis; heme O from protoheme: step 1/1. Converts heme B (protoheme IX) to heme O by substitution of the vinyl group on carbon 2 of heme B porphyrin ring with a hydroxyethyl farnesyl side group. The protein is Protoheme IX farnesyltransferase 1 of Pseudomonas fluorescens (strain Pf0-1).